The following is a 777-amino-acid chain: Acyl-CoA dehydrogenase family member 11 (777 aa).

FAD is bound by residues 501-511 (FCMTEPDVASS), 509-511 (ASS), 535-537 (WSS), and S537. S511 provides a ligand contact to substrate. 626 to 629 (GPGR) provides a ligand contact to substrate. Residues R654, Q724, and 724–728 (QVCGG) each bind FAD. G752 lines the substrate pocket. Residues 753-755 (PDE) and E755 each bind FAD.

It belongs to the acyl-CoA dehydrogenase family. In terms of assembly, homodimer. FAD serves as cofactor.

The protein localises to the peroxisome. Its subcellular location is the mitochondrion membrane. The catalysed reaction is a 2,3-saturated acyl-CoA + oxidized [electron-transfer flavoprotein] + H(+) = a (2E)-enoyl-CoA + reduced [electron-transfer flavoprotein]. It carries out the reaction docosanoyl-CoA + oxidized [electron-transfer flavoprotein] + H(+) = (2E)-docosenoyl-CoA + reduced [electron-transfer flavoprotein]. It catalyses the reaction tetracosanoyl-CoA + oxidized [electron-transfer flavoprotein] + H(+) = (2E)-tetracosenoyl-CoA + reduced [electron-transfer flavoprotein]. The enzyme catalyses eicosanoyl-CoA + oxidized [electron-transfer flavoprotein] + H(+) = (2E)-eicosenoyl-CoA + reduced [electron-transfer flavoprotein]. The catalysed reaction is hexacosanoyl-CoA + oxidized [electron-transfer flavoprotein] + H(+) = (2E)-hexacosenoyl-CoA + reduced [electron-transfer flavoprotein]. It carries out the reaction tricosanoyl-CoA + oxidized [electron-transfer flavoprotein] + H(+) = (2E)-tricosenoyl-CoA + reduced [electron-transfer flavoprotein]. It functions in the pathway lipid metabolism; fatty acid beta-oxidation. Its function is as follows. Acyl-CoA dehydrogenase, that exhibits maximal activity towards saturated C22-CoA. Probably participates in beta-oxydation and energy production but could also play a role in the metabolism of specific fatty acids to control fatty acids composition of cellular lipids in brain. This Gallus gallus (Chicken) protein is Acyl-CoA dehydrogenase family member 11 (ACAD11).